Consider the following 232-residue polypeptide: UPF0502 protein Aave_3438 (232 aa).

Belongs to the UPF0502 family.

This chain is UPF0502 protein Aave_3438, found in Paracidovorax citrulli (strain AAC00-1) (Acidovorax citrulli).